The following is a 503-amino-acid chain: MLLEMLNPMHYNITSMMPEVMPVATMPILLLTGFLLLVWNYEDTSSIPGPGYCMGIGPLISHCRFLWMGIGSACNYYNKMYGEFMRVWICGEETLIISKSSSMFHIMKHSHYSSRFGSKLGLQCIGMHENGIIFNNNPTLWKAIRPFFTKALSGPGLVRMVTVCVGSIITHLDRLEEVSNELGYVDVLTLMRRIMLDTSNILFLGIPLDESAIVVKIQGYFDAWQALLLKPDIFFKISWLYKKYEKSVKDLKDAMEILIEEKRHRISTAEKLEDHMDFATELIFAEKRGDLTRENVNQCILEMLIAAPDTMSVSVFFMLFLIAKHPKVEESIMKEIQAVVGERDIRIDDMQKLKVVENFIYESMRYQPVVNLVMRKALQDDIIDGYLVKKGTNIILNIGRMHRLEFFPKPNEFTLENFAKNVPYRYFQPFGFGPRSCAGKYIAMVMMKVVLVTLLRRFHVQTLQGECIENMQKKYGLSLHPDETNNLLEMVFVPRNSEKCLER.

The next 3 membrane-spanning stretches (helical) occupy residues 19-39 (EVMPVATMPILLLTGFLLLVW), 51-71 (GYCMGIGPLISHCRFLWMGIG), and 303-323 (MLIAAPDTMSVSVFFMLFLIA). 2 residues coordinate substrate: Asp309 and Met374. Cys437 is a binding site for heme.

It belongs to the cytochrome P450 family. Heme serves as cofactor.

Its subcellular location is the endoplasmic reticulum membrane. The protein localises to the microsome membrane. The catalysed reaction is testosterone + 3 reduced [NADPH--hemoprotein reductase] + 3 O2 = 17beta-estradiol + formate + 3 oxidized [NADPH--hemoprotein reductase] + 4 H2O + 4 H(+). The enzyme catalyses androst-4-ene-3,17-dione + 3 reduced [NADPH--hemoprotein reductase] + 3 O2 = estrone + formate + 3 oxidized [NADPH--hemoprotein reductase] + 4 H2O + 4 H(+). It carries out the reaction androst-4-ene-3,17-dione + reduced [NADPH--hemoprotein reductase] + O2 = 19-hydroxyandrost-4-ene-3,17-dione + oxidized [NADPH--hemoprotein reductase] + H2O + H(+). It catalyses the reaction 19-hydroxyandrost-4-ene-3,17-dione + reduced [NADPH--hemoprotein reductase] + O2 = 19-oxo-androst-4-ene-3,17-dione + oxidized [NADPH--hemoprotein reductase] + 2 H2O + H(+). The catalysed reaction is 19-oxo-androst-4-ene-3,17-dione + reduced [NADPH--hemoprotein reductase] + O2 = estrone + formate + oxidized [NADPH--hemoprotein reductase] + H2O + 2 H(+). The enzyme catalyses estrone + reduced [NADPH--hemoprotein reductase] + O2 = 2-hydroxyestrone + oxidized [NADPH--hemoprotein reductase] + H2O + H(+). It carries out the reaction 17beta-hydroxy-5alpha-androstan-3-one + reduced [NADPH--hemoprotein reductase] + O2 = 17beta,19-dihydroxy-3-oxo-5alpha-androstanone + oxidized [NADPH--hemoprotein reductase] + H2O + H(+). It catalyses the reaction 17beta,19-dihydroxy-3-oxo-5alpha-androstanone + reduced [NADPH--hemoprotein reductase] + O2 = 17beta-hydroxy-3,19-dioxo-5alpha-androstanone + oxidized [NADPH--hemoprotein reductase] + 2 H2O + H(+). The catalysed reaction is 17beta-hydroxy-3,19-dioxo-5alpha-androstanone + reduced [NADPH--hemoprotein reductase] + O2 = 17beta-hydroxy-3-oxo-19-nor-5alpha-androst-1-ene + formate + oxidized [NADPH--hemoprotein reductase] + H2O + 2 H(+). The protein operates within steroid hormone biosynthesis. In terms of biological role, a cytochrome P450 monooxygenase that catalyzes the conversion of C19 androgens, androst-4-ene-3,17-dione (androstenedione) and testosterone to the C18 estrogens, estrone and estradiol, respectively. Catalyzes three successive oxidations of C19 androgens: two conventional oxidations at C19 yielding 19-hydroxy and 19-oxo/19-aldehyde derivatives, followed by a third oxidative aromatization step that involves C1-beta hydrogen abstraction combined with cleavage of the C10-C19 bond to yield a phenolic A ring and formic acid. Alternatively, the third oxidative reaction yields a 19-norsteroid and formic acid. Converts dihydrotestosterone to delta1,10-dehydro 19-nordihydrotestosterone and may play a role in homeostasis of this potent androgen. Also displays 2-hydroxylase activity toward estrone. Mechanistically, uses molecular oxygen inserting one oxygen atom into a substrate, and reducing the second into a water molecule, with two electrons provided by NADPH via cytochrome P450 reductase (CPR; NADPH-ferrihemoprotein reductase). This Canis lupus familiaris (Dog) protein is Aromatase (CYP19A1).